The primary structure comprises 481 residues: GTPase Obg (481 aa).

An Obg domain is found at 2-159 (TTFVDRVVLH…IDVVLELKSV (158 aa)). One can recognise an OBG-type G domain in the interval 160 to 330 (ADVGLVGYPS…LMYAMGELVT (171 aa)). GTP is bound by residues 166–173 (GYPSAGKS), 191–195 (FTTLV), 212–215 (DVPG), 282–285 (NKVD), and 311–313 (SAA). Residues Ser173 and Thr193 each coordinate Mg(2+). Residues 348-426 (PKAVDDAGFT…IGEREFDWQP (79 aa)) form the OCT domain. Positions 439–452 (GDQRLAEKSERPSA) are enriched in basic and acidic residues. Residues 439–481 (GDQRLAEKSERPSATERLAARKARRQRPEDEAEADEPVGDGEE) are disordered. Positions 468–481 (DEAEADEPVGDGEE) are enriched in acidic residues.

It belongs to the TRAFAC class OBG-HflX-like GTPase superfamily. OBG GTPase family. As to quaternary structure, monomer. Mg(2+) serves as cofactor.

The protein localises to the cytoplasm. In terms of biological role, an essential GTPase which binds GTP, GDP and possibly (p)ppGpp with moderate affinity, with high nucleotide exchange rates and a fairly low GTP hydrolysis rate. Plays a role in control of the cell cycle, stress response, ribosome biogenesis and in those bacteria that undergo differentiation, in morphogenesis control. In Salinispora tropica (strain ATCC BAA-916 / DSM 44818 / JCM 13857 / NBRC 105044 / CNB-440), this protein is GTPase Obg.